Reading from the N-terminus, the 102-residue chain is Small ribosomal subunit protein uS10 (102 aa).

It belongs to the universal ribosomal protein uS10 family. As to quaternary structure, part of the 30S ribosomal subunit.

Functionally, involved in the binding of tRNA to the ribosomes. The sequence is that of Small ribosomal subunit protein uS10 from Geobacter sulfurreducens (strain ATCC 51573 / DSM 12127 / PCA).